The sequence spans 206 residues: uncharacterized protein (206 aa).

The tract at residues 128-206 (KRYNVQKPKV…DQSWLDELLR (79 aa)) is disordered. Residues 171–181 (YISSNHSSMHI) are compositionally biased toward polar residues.

The protein resides in the cytoplasm. It localises to the nucleus. This is an uncharacterized protein from Schizosaccharomyces pombe (strain 972 / ATCC 24843) (Fission yeast).